Here is a 270-residue protein sequence, read N- to C-terminus: Tetraspanin-14 (270 aa).

At 1–17 the chain is on the cytoplasmic side; the sequence is MHYYRYSNAEVSCWYKY. A helical transmembrane segment spans residues 18–38; that stretch reads LLFSYNIVFWLAGVVFLGVGL. Over 39-61 the chain is Extracellular; it reads WAWSEKGVLSDLTKVTRLHGIDP. The helical transmembrane segment at 62–82 threads the bilayer; sequence VVLVLMVGVVMFTLGFAGCVG. The Cytoplasmic portion of the chain corresponds to 83 to 92; that stretch reads ALRENICLLK. Residues 93–113 traverse the membrane as a helical segment; it reads FFCGAIVLIFFLELAVAVLAF. Topologically, residues 114-232 are extracellular; it reads LFQDWVRDRF…QALEGWLPRN (119 aa). The necessary and sufficient for interaction with ADAM10 stretch occupies residues 114–232; the sequence is LFQDWVRDRF…QALEGWLPRN (119 aa). 4 disulfide bridges follow: C153–C221, C154–C186, C170–C180, and C187–C200. The N-linked (GlcNAc...) asparagine glycan is linked to N169. The chain crosses the membrane as a helical span at residues 233-253; that stretch reads IYIVAGVFIAISLLQIFGIFL. At 254 to 270 the chain is on the cytoplasmic side; it reads ARTLISDIEAVKAGHHF.

This sequence belongs to the tetraspanin (TM4SF) family. As to quaternary structure, interacts with ADAM10; the interaction promotes ADAM10 maturation and cell surface expression.

Its subcellular location is the cell membrane. In terms of biological role, part of TspanC8 subgroup, composed of 6 members that interact with the transmembrane metalloprotease ADAM10. This interaction is required for ADAM10 exit from the endoplasmic reticulum and for enzymatic maturation and trafficking to the cell surface as well as substrate specificity. Different TspanC8/ADAM10 complexes have distinct substrates. Negatively regulates ADAM10-mediated cleavage of GP6. Promotes ADAM10-mediated cleavage of CDH5. This Mus musculus (Mouse) protein is Tetraspanin-14 (Tspan14).